The sequence spans 269 residues: 15-hydroxyprostaglandin dehydrogenase [NAD(+)] (269 aa).

NAD(+) is bound by residues 12-20, 36-37, 63-65, and Asn-91; these read GAAQGIGKA, DW, and CDV. 2 residues coordinate substrate: Ser-138 and Gln-148. Tyr-151 acts as the Proton acceptor in catalysis. Residues 151-155 and 186-188 contribute to the NAD(+) site; these read YCASK and VDT.

The protein belongs to the short-chain dehydrogenases/reductases (SDR) family. As to quaternary structure, homodimer. As to expression, expressed in proximal convoluted tubules of the kidney, where it colocalizes with the prostaglandin transporter SLC22A22 (at protein level). Expressed in lung, intestine, stomach and liver.

The protein resides in the cytoplasm. It carries out the reaction prostaglandin E2 + NAD(+) = 15-oxoprostaglandin E2 + NADH + H(+). It catalyses the reaction (15S)-hydroxy-(5Z,8Z,11Z,13E)-eicosatetraenoate + NAD(+) = 15-oxo-(5Z,8Z,11Z,13E)-eicosatetraenoate + NADH + H(+). The enzyme catalyses (11R)-hydroxy-(5Z,8Z,12E,14Z)-eicosatetraenoate + NAD(+) = 11-oxo-(5Z,8Z,12E,14Z)-eicosatetraenoate + NADH + H(+). The catalysed reaction is lipoxin A4 + NAD(+) = 15-oxo-(5S,6R)-dihydroxy-(7E,9E,11Z,13E)-eicosatetraenoate + NADH + H(+). It carries out the reaction 15-oxo-(5S,6R)-dihydroxy-(7E,9E,11Z)-eicosatrienoate + NADH + H(+) = (5S,6R,15S)-trihydroxy-(7E,9E,11Z)-eicosatrienoate + NAD(+). It catalyses the reaction prostaglandin A1 + NAD(+) = 15-oxo-prostaglandin A1 + NADH + H(+). The enzyme catalyses prostaglandin E1 + NAD(+) = 15-oxoprostaglandin E1 + NADH + H(+). The catalysed reaction is 14-hydroxy-(4Z,7Z,10Z,12E,16Z,19Z)-docosahexaenoate + NAD(+) = 14-oxo-(4Z,7Z,10Z,12E,16Z,19Z)-docosahexaenoate + NADH + H(+). It carries out the reaction resolvin E1 + NAD(+) = 18-oxo-resolvin E1 + NADH + H(+). It catalyses the reaction resolvin D1 + NAD(+) = 8-oxoresolvin D1 + NADH + H(+). The enzyme catalyses resolvin D1 + NAD(+) = 17-oxoresolvin D1 + NADH + H(+). The catalysed reaction is resolvin D2 + NAD(+) = 7-oxoresolvin D2 + NADH + H(+). It carries out the reaction resolvin D2 + NAD(+) = 16-oxoresolvin D2 + NADH + H(+). In terms of biological role, catalyzes the NAD-dependent dehydrogenation (oxidation) of a broad array of hydroxylated polyunsaturated fatty acids (mainly eicosanoids and docosanoids, including prostaglandins, lipoxins and resolvins), yielding their corresponding keto (oxo) metabolites. Decreases the levels of the pro-proliferative prostaglandins such as prostaglandin E2 (whose activity is increased in cancer because of an increase in the expression of cyclooxygenase 2) and generates oxo-fatty acid products that can profoundly influence cell function by abrogating pro-inflammatory cytokine expression. Converts resolvins E1, D1 and D2 to their oxo products, which represents a mode of resolvin inactivation. Resolvin E1 plays important roles during the resolution phase of acute inflammation, while resolvins D1 and D2 have a unique role in obesity-induced adipose inflammation. This chain is 15-hydroxyprostaglandin dehydrogenase [NAD(+)] (Hpgd), found in Mus musculus (Mouse).